The following is a 428-amino-acid chain: Cysteine--tRNA ligase (428 aa).

C23 provides a ligand contact to Zn(2+). The short motif at 25–35 (PTVYNDLHLGN) is the 'HIGH' region element. Zn(2+) contacts are provided by C196, H221, and E225. The 'KMSKS' region motif lies at 253–257 (KMSKS). K256 provides a ligand contact to ATP.

Belongs to the class-I aminoacyl-tRNA synthetase family. As to quaternary structure, monomer. The cofactor is Zn(2+).

It is found in the cytoplasm. The catalysed reaction is tRNA(Cys) + L-cysteine + ATP = L-cysteinyl-tRNA(Cys) + AMP + diphosphate. The protein is Cysteine--tRNA ligase (cysS) of Mycoplasma genitalium (strain ATCC 33530 / DSM 19775 / NCTC 10195 / G37) (Mycoplasmoides genitalium).